Consider the following 776-residue polypeptide: DNA topoisomerase 1 (776 aa).

The region spanning 1–111 (MKLVIVESPA…VKSDDFFKRV (111 aa)) is the Toprim domain. Residues E7 and D80 each contribute to the Mg(2+) site. A Topo IA-type catalytic domain is found at 132–568 (DANLVNAQQA…FWSGFNHNIE (437 aa)). The interaction with DNA stretch occupies residues 166–171 (SAGRVQ). Y304 serves as the catalytic O-(5'-phospho-DNA)-tyrosine intermediate. The segment at 600-627 (CPSCKTGELSLKLGKFGAFLACSNYPEC) adopts a C4-type zinc-finger fold.

Belongs to the type IA topoisomerase family. Monomer. The cofactor is Mg(2+).

The catalysed reaction is ATP-independent breakage of single-stranded DNA, followed by passage and rejoining.. Releases the supercoiling and torsional tension of DNA, which is introduced during the DNA replication and transcription, by transiently cleaving and rejoining one strand of the DNA duplex. Introduces a single-strand break via transesterification at a target site in duplex DNA. The scissile phosphodiester is attacked by the catalytic tyrosine of the enzyme, resulting in the formation of a DNA-(5'-phosphotyrosyl)-enzyme intermediate and the expulsion of a 3'-OH DNA strand. The free DNA strand then undergoes passage around the unbroken strand, thus removing DNA supercoils. Finally, in the religation step, the DNA 3'-OH attacks the covalent intermediate to expel the active-site tyrosine and restore the DNA phosphodiester backbone. In Rickettsia felis (strain ATCC VR-1525 / URRWXCal2) (Rickettsia azadi), this protein is DNA topoisomerase 1.